Reading from the N-terminus, the 62-residue chain is Sec-independent protein translocase protein TatA (62 aa).

A helical membrane pass occupies residues leucine 10–alanine 32.

Belongs to the TatA/E family. In terms of assembly, forms a complex with TatC.

The protein resides in the cell membrane. Its function is as follows. Part of the twin-arginine translocation (Tat) system that transports large folded proteins containing a characteristic twin-arginine motif in their signal peptide across membranes. TatA could form the protein-conducting channel of the Tat system. The chain is Sec-independent protein translocase protein TatA from Chloroflexus aurantiacus (strain ATCC 29366 / DSM 635 / J-10-fl).